Here is a 100-residue protein sequence, read N- to C-terminus: Urease subunit gamma (100 aa).

It belongs to the urease gamma subunit family. Heterotrimer of UreA (gamma), UreB (beta) and UreC (alpha) subunits. Three heterotrimers associate to form the active enzyme.

It localises to the cytoplasm. It carries out the reaction urea + 2 H2O + H(+) = hydrogencarbonate + 2 NH4(+). It participates in nitrogen metabolism; urea degradation; CO(2) and NH(3) from urea (urease route): step 1/1. The polypeptide is Urease subunit gamma (Micrococcus luteus (strain ATCC 4698 / DSM 20030 / JCM 1464 / CCM 169 / CCUG 5858 / IAM 1056 / NBRC 3333 / NCIMB 9278 / NCTC 2665 / VKM Ac-2230) (Micrococcus lysodeikticus)).